A 338-amino-acid chain; its full sequence is Ferredoxin--NADP reductase (338 aa).

FAD contacts are provided by Asp38, Gln46, Tyr51, Val91, Phe125, Asp291, and Thr331.

The protein belongs to the ferredoxin--NADP reductase type 2 family. As to quaternary structure, homodimer. FAD serves as cofactor.

It carries out the reaction 2 reduced [2Fe-2S]-[ferredoxin] + NADP(+) + H(+) = 2 oxidized [2Fe-2S]-[ferredoxin] + NADPH. The sequence is that of Ferredoxin--NADP reductase from Orientia tsutsugamushi (strain Boryong) (Rickettsia tsutsugamushi).